Here is a 349-residue protein sequence, read N- to C-terminus: 4-hydroxy-2-oxovalerate aldolase 2 (349 aa).

The region spanning 12 to 264 (VRMTDTSLRD…KTGIDFFDIA (253 aa)) is the Pyruvate carboxyltransferase domain. 20-21 (RD) serves as a coordination point for substrate. D21 provides a ligand contact to Mn(2+). Residue H24 is the Proton acceptor of the active site. Substrate is bound by residues S174 and H203. The Mn(2+) site is built by H203 and H205. Substrate is bound at residue Y294.

This sequence belongs to the 4-hydroxy-2-oxovalerate aldolase family.

It carries out the reaction (S)-4-hydroxy-2-oxopentanoate = acetaldehyde + pyruvate. The polypeptide is 4-hydroxy-2-oxovalerate aldolase 2 (bphI-2) (Mycolicibacterium smegmatis (strain ATCC 700084 / mc(2)155) (Mycobacterium smegmatis)).